Reading from the N-terminus, the 1041-residue chain is Pre-mRNA-splicing factor ATP-dependent RNA helicase DHX16 (1041 aa).

2 disordered regions span residues 101-207 (EDSE…AYEE) and 371-391 (LQGD…QKES). 3 positions are modified to phosphoserine: Ser-103, Ser-106, and Ser-107. Over residues 119–130 (QKKRKKRKHLRK) the composition is skewed to basic residues. Position 160 is a phosphoserine (Ser-160). A compositionally biased stretch (basic and acidic residues) spans 166 to 207 (RTERERLQDLEERDAFAERVRQRDKDRTRNVLERSDKKAYEE). Over residues 381–391 (PTSTQAQQKES) the composition is skewed to polar residues. A Helicase ATP-binding domain is found at 409-573 (LAAIANHQVL…FDDAPVFRIP (165 aa)). Residue 422–429 (GETGSGKT) coordinates ATP. The short motif at 520–523 (DEAH) is the DEAH box element. Positions 598 to 771 (SVLQIHVTQP…NVVLLLKSLG (174 aa)) constitute a Helicase C-terminal domain. Thr-712 carries the phosphothreonine modification.

This sequence belongs to the DEAD box helicase family. DEAH subfamily. DDX16/PRP8 sub-subfamily. In terms of assembly, component of pre-catalytic spliceosome complexes. Component of the minor spliceosome, which splices U12-type introns. Interacts with GPKOW. Interacts with TRIM6. Interacts with RIGI. In terms of tissue distribution, expressed in the spleen, thyroid and testis. Also expressed in the brain and cerebellum.

It localises to the nucleus. The protein resides in the nucleoplasm. The protein localises to the cytoplasm. The enzyme catalyses ATP + H2O = ADP + phosphate + H(+). In terms of biological role, required for pre-mRNA splicing as a component of the spliceosome. Contributes to pre-mRNA splicing after spliceosome formation and prior to the first transesterification reaction. As a component of the minor spliceosome, involved in the splicing of U12-type introns in pre-mRNAs. Also plays a role in innate antiviral response by acting as a pattern recognition receptor sensing splicing signals in viral RNA. Mechanistically, TRIM6 promotes the interaction between unanchored 'Lys-48'-polyubiquitin chains and DHX16, leading to DHX16 interaction with RIGI and ssRNA to amplify RIGI-dependent innate antiviral immune responses. The polypeptide is Pre-mRNA-splicing factor ATP-dependent RNA helicase DHX16 (DHX16) (Homo sapiens (Human)).